The following is a 146-amino-acid chain: NADH-quinone oxidoreductase subunit A (146 aa).

The next 3 membrane-spanning stretches (helical) occupy residues 14–34 (FALF…GGFL), 68–88 (LVAM…AWAV), and 96–116 (IGFI…IYLV).

The protein belongs to the complex I subunit 3 family. As to quaternary structure, NDH-1 is composed of 13 different subunits. Subunits NuoA, H, J, K, L, M, N constitute the membrane sector of the complex.

Its subcellular location is the cell inner membrane. The enzyme catalyses a quinone + NADH + 5 H(+)(in) = a quinol + NAD(+) + 4 H(+)(out). Its function is as follows. NDH-1 shuttles electrons from NADH, via FMN and iron-sulfur (Fe-S) centers, to quinones in the respiratory chain. The immediate electron acceptor for the enzyme in this species is believed to be ubiquinone. Couples the redox reaction to proton translocation (for every two electrons transferred, four hydrogen ions are translocated across the cytoplasmic membrane), and thus conserves the redox energy in a proton gradient. The protein is NADH-quinone oxidoreductase subunit A of Pectobacterium atrosepticum (strain SCRI 1043 / ATCC BAA-672) (Erwinia carotovora subsp. atroseptica).